A 224-amino-acid chain; its full sequence is Glutathione S-transferase U4 (224 aa).

The region spanning 6 to 85 (EDVKLLGFWA…YIDQIWKNNP (80 aa)) is the GST N-terminal domain. Residues 16 to 17 (SP), 42 to 43 (NK), 56 to 57 (KV), and 69 to 70 (ES) contribute to the glutathione site. The 128-residue stretch at 90–217 (DPYEKAMALF…EEQIEHMKKV (128 aa)) folds into the GST C-terminal domain. Residue T151 is modified to Phosphothreonine.

This sequence belongs to the GST superfamily. Tau family.

It localises to the cytoplasm. The protein localises to the cytosol. It catalyses the reaction RX + glutathione = an S-substituted glutathione + a halide anion + H(+). May be involved in the conjugation of reduced glutathione to a wide number of exogenous and endogenous hydrophobic electrophiles and have a detoxification role against certain herbicides. The sequence is that of Glutathione S-transferase U4 (GSTU4) from Arabidopsis thaliana (Mouse-ear cress).